The chain runs to 519 residues: Ent-kaurene oxidase (519 aa).

Residues 1-10 (MDTLLSLQAV) are Chloroplast intermembrane-facing. Residues 11-31 (PAAAAIGGPVVAIGGITLFFI) form a helical membrane-spanning segment. At 32–519 (REYVKDQRKK…PRLRDRVCVS (488 aa)) the chain is on the cytoplasmic side. Cys458 provides a ligand contact to heme.

Belongs to the cytochrome P450 family. It depends on heme as a cofactor.

The protein localises to the plastid. It is found in the chloroplast outer membrane. It catalyses the reaction ent-kaur-16-ene + 3 reduced [NADPH--hemoprotein reductase] + 3 O2 = ent-kaur-16-en-19-oate + 3 oxidized [NADPH--hemoprotein reductase] + 4 H2O + 4 H(+). It functions in the pathway plant hormone biosynthesis; gibberellin biosynthesis. Its function is as follows. Catalyzes three successive oxidations of the 4-methyl group of ent-kaurene giving kaurenoic acid, a key step in gibberellins (GAs) biosynthesis. GAs, which are involved many processes, including stem elongation, play a central role in plant development. This is Ent-kaurene oxidase from Salvia miltiorrhiza (Chinese sage).